Reading from the N-terminus, the 279-residue chain is Fatty acid elongase 2 (279 aa).

A run of 7 helical transmembrane segments spans residues Leu16 to Trp36, Ala61 to Val81, Phe112 to Leu132, Pro138 to Cys158, Met164 to Met184, Phe196 to Thr216, and Met242 to Tyr262. The HxxHH motif signature appears at His142–His146. The active-site Nucleophile is the His145.

Belongs to the ELO family.

It is found in the endoplasmic reticulum membrane. It carries out the reaction an acyl-CoA + malonyl-CoA + H(+) = a 3-oxoacyl-CoA + CO2 + CoA. Its pathway is lipid metabolism; fatty acid biosynthesis. In terms of biological role, involved in the synthesis of fatty acids. Elongates C10 fatty acids to C14. Required for the maintenance of the global lipidome profile in this parasite. This is Fatty acid elongase 2 from Trypanosoma cruzi (strain CL Brener).